Consider the following 595-residue polypeptide: O-phosphoseryl-tRNA(Sec) selenium transferase (595 aa).

Arg75 provides a ligand contact to pyridoxal 5'-phosphate. Positions 96–106 (GRSGDLFSEQP) are phosphate loop (P-loop). Substrate contacts are provided by Arg97, Ser98, and Gln105. The segment covering 174-187 (RTVTKDSTSATSAA) has biased composition (polar residues). Disordered stretches follow at residues 174 to 208 (RTVT…TSLP) and 257 to 278 (STNR…TPTS). Positions 196–205 (EADRDRHDRT) are enriched in basic and acidic residues. Arg358 contributes to the tRNA binding site. Residue Lys371 is modified to N6-(pyridoxal phosphate)lysine. Substrate is bound at residue Arg400.

This sequence belongs to the SepSecS family. Homotetramer composed of two homodimers. Pyridoxal 5'-phosphate is required as a cofactor.

It localises to the cytoplasm. The catalysed reaction is O-phospho-L-seryl-tRNA(Sec) + selenophosphate + H2O = L-selenocysteinyl-tRNA(Sec) + 2 phosphate. Its pathway is aminoacyl-tRNA biosynthesis; selenocysteinyl-tRNA(Sec) biosynthesis; selenocysteinyl-tRNA(Sec) from L-seryl-tRNA(Sec) (archaeal/eukaryal route): step 2/2. Its function is as follows. Converts O-phosphoseryl-tRNA(Sec) to selenocysteinyl-tRNA(Sec) required for selenoprotein biosynthesis. This Leishmania donovani protein is O-phosphoseryl-tRNA(Sec) selenium transferase.